Consider the following 114-residue polypeptide: uncharacterized protein (114 aa).

2 helical membrane-spanning segments follow: residues Val14 to Leu34 and Val75 to Ala95.

Its subcellular location is the membrane. This is an uncharacterized protein from Homo sapiens (Human).